Here is a 169-residue protein sequence, read N- to C-terminus: uncharacterized protein (169 aa).

Residues 35–163 form the Nudix hydrolase domain; that stretch reads LIGRGTFILL…PYCPDSLQAL (129 aa). The short motif at 81 to 103 is the Nudix box element; that stretch reads YADSAARELEEELGIRDAVLREH. The Mg(2+) site is built by E88 and E92.

This sequence belongs to the Nudix hydrolase family. Requires Mg(2+) as cofactor.

This is an uncharacterized protein from Pseudomonas aeruginosa (strain ATCC 15692 / DSM 22644 / CIP 104116 / JCM 14847 / LMG 12228 / 1C / PRS 101 / PAO1).